Here is a 292-residue protein sequence, read N- to C-terminus: MYSYKKISYQMEEVMSMIFHGMKLVKSLESSLPEKPPESLLTSLDEIVKTFSDANERLKMLLEIKNSETALNKTKPVIVSVANQMLMQMEPGLMQEYWLRYGGSTSSQGTEAMFQTQLMAVDGGGERNLTAAVERSGASGSSTPRQRRRKDEGEEQTVLVAALRTGNTDLPPDDNHTWRKYGQKEILGSRFPRAYYRCTHQKLYNCPAKKQVQRLNDDPFTFRVTYRGSHTCYNSTAPTASSATPSTIPISSVTTGHSVDYGLAVVDMADVMFGSGGVGTNMDFIFPKNDPS.

The disordered stretch occupies residues 133-155; sequence VERSGASGSSTPRQRRRKDEGEE. Positions 167 to 235 form a DNA-binding region, WRKY; sequence NTDLPPDDNH…YRGSHTCYNS (69 aa).

This sequence belongs to the WRKY group III family.

It localises to the nucleus. In terms of biological role, transcription factor. Interacts specifically with the W box (5'-(T)TGAC[CT]-3'), a frequently occurring elicitor-responsive cis-acting element. The polypeptide is WRKY transcription factor 55 (WRKY55) (Arabidopsis thaliana (Mouse-ear cress)).